Consider the following 316-residue polypeptide: Lys-63-specific deubiquitinase BRCC36 (316 aa).

At Ala-2 the chain carries N-acetylalanine. Residues 12-179 form the MPN domain; the sequence is VHLESDAFLV…YTCFQSIQAQ (168 aa). Positions 122, 124, and 135 each coordinate Zn(2+). A JAMM motif motif is present at residues 122 to 135; the sequence is HSHPHITVWPSHVD. Position 258 is a phosphoserine (Ser-258).

Belongs to the peptidase M67A family. BRCC36 subfamily. As to quaternary structure, component of the ARISC complex, at least composed of UIMC1/RAP80, ABRAXAS1, BRCC3/BRCC36, BABAM2 and BABAM1/NBA1. Component of the BRCA1-A complex, at least composed of BRCA1, BARD1, UIMC1/RAP80, ABRAXAS1, BRCC3/BRCC36, BABAM2 and BABAM1/NBA1. In the BRCA1-A complex, interacts directly with ABRAXAS1 and BABAM2. Component of the BRISC complex, at least composed of ABRAXAS2, BRCC3/BRCC36, BABAM2 and BABAM1/NBA1. Identified in a complex with SHMT2 and the other subunits of the BRISC complex. In the BRISC complex, interacts directly with ABRAXAS2. Identified in a complex with ABRAXAS2 and NUMA1. The BRISC complex interacts with the CSN complex. Component of the BRCA1/BRCA2 containing complex (BRCC), which also contains BRCA1, BRCA2, BARD1, BABAM2 and RAD51. BRCC is a ubiquitin E3 ligase complex that enhances cellular survival following DNA damage. Interacts with BRCA1. Binds polyubiquitin. Interacts with PWWP2B. Interacts with HDAC1; this interaction is enhanced in the presence of PWWP2B. Zn(2+) serves as cofactor.

Its subcellular location is the nucleus. The protein resides in the cytoplasm. It localises to the cytoskeleton. The protein localises to the spindle pole. In terms of biological role, metalloprotease that specifically cleaves 'Lys-63'-linked polyubiquitin chains. Does not have activity toward 'Lys-48'-linked polyubiquitin chains. Component of the BRCA1-A complex, a complex that specifically recognizes 'Lys-63'-linked ubiquitinated histones H2A and H2AX at DNA lesions sites, leading to target the BRCA1-BARD1 heterodimer to sites of DNA damage at double-strand breaks (DSBs). In the BRCA1-A complex, it specifically removes 'Lys-63'-linked ubiquitin on histones H2A and H2AX, antagonizing the RNF8-dependent ubiquitination at double-strand breaks (DSBs). Catalytic subunit of the BRISC complex, a multiprotein complex that specifically cleaves 'Lys-63'-linked ubiquitin in various substrates. Mediates the specific 'Lys-63'-specific deubiquitination associated with the COP9 signalosome complex (CSN), via the interaction of the BRISC complex with the CSN complex. The BRISC complex is required for normal mitotic spindle assembly and microtubule attachment to kinetochores via its role in deubiquitinating NUMA1. Plays a role in interferon signaling via its role in the deubiquitination of the interferon receptor IFNAR1; deubiquitination increases IFNAR1 activity by enhancing its stability and cell surface expression. Acts as a regulator of the NLRP3 inflammasome by mediating deubiquitination of NLRP3, leading to NLRP3 inflammasome assembly. Down-regulates the response to bacterial lipopolysaccharide (LPS) via its role in IFNAR1 deubiquitination. Deubiquitinates HDAC1 and PWWP2B leading to their stabilization. The chain is Lys-63-specific deubiquitinase BRCC36 (BRCC3) from Callithrix jacchus (White-tufted-ear marmoset).